Reading from the N-terminus, the 431-residue chain is SPI-1 type 3 secretion system ATPase (431 aa).

162–167 (GCGKTM) lines the ATP pocket.

This sequence belongs to the ATPase alpha/beta chains family. T3SS ATPase subfamily. The core secretion machinery of the T3SS is composed of approximately 20 different proteins, including cytoplasmic components, a base, an export apparatus and a needle. This subunit is part of the cytosolic complex. Forms homohexamers.

It is found in the cytoplasm. It catalyses the reaction ATP + H2O + cellular proteinSide 1 = ADP + phosphate + cellular proteinSide 2.. ATPase component of the type III secretion system (T3SS), also called injectisome, which is used to inject bacterial effector proteins into eukaryotic host cells. Acts as a molecular motor to provide the energy that is required for the export of proteins. Required for type III secretion apparatus (T3SA) formation, proper protein secretion, host cell invasion and virulence. May play a critical role in T3SS substrate recognition, disassembly of the effector/chaperone complex and unfolding of the effector in an ATP-dependent manner prior to secretion. The protein is SPI-1 type 3 secretion system ATPase of Salmonella typhi.